A 417-amino-acid polypeptide reads, in one-letter code: Serine--tRNA ligase (417 aa).

226 to 228 (TSE) is a binding site for L-serine. Residues 257–259 (RRE) and Val-273 each bind ATP. Glu-280 lines the L-serine pocket. 344 to 347 (EVTS) is an ATP binding site. Thr-379 serves as a coordination point for L-serine.

This sequence belongs to the class-II aminoacyl-tRNA synthetase family. Type-1 seryl-tRNA synthetase subfamily. Homodimer. The tRNA molecule binds across the dimer.

The protein localises to the cytoplasm. It catalyses the reaction tRNA(Ser) + L-serine + ATP = L-seryl-tRNA(Ser) + AMP + diphosphate + H(+). The catalysed reaction is tRNA(Sec) + L-serine + ATP = L-seryl-tRNA(Sec) + AMP + diphosphate + H(+). The protein operates within aminoacyl-tRNA biosynthesis; selenocysteinyl-tRNA(Sec) biosynthesis; L-seryl-tRNA(Sec) from L-serine and tRNA(Sec): step 1/1. In terms of biological role, catalyzes the attachment of serine to tRNA(Ser). Is also able to aminoacylate tRNA(Sec) with serine, to form the misacylated tRNA L-seryl-tRNA(Sec), which will be further converted into selenocysteinyl-tRNA(Sec). This Tropheryma whipplei (strain Twist) (Whipple's bacillus) protein is Serine--tRNA ligase.